The sequence spans 148 residues: Lysozyme C (148 aa).

The first 18 residues, 1–18 (MKAVIILGLVLLSVTVQG), serve as a signal peptide directing secretion. Residues 19 to 148 (KIFERCELAR…VSQYVQGCGV (130 aa)) form the C-type lysozyme domain. Cystine bridges form between Cys24/Cys146, Cys48/Cys134, Cys83/Cys99, and Cys95/Cys113. Active-site residues include Glu53 and Asp71.

It belongs to the glycosyl hydrolase 22 family. As to quaternary structure, monomer.

The enzyme catalyses Hydrolysis of (1-&gt;4)-beta-linkages between N-acetylmuramic acid and N-acetyl-D-glucosamine residues in a peptidoglycan and between N-acetyl-D-glucosamine residues in chitodextrins.. Lysozymes have primarily a bacteriolytic function; those in tissues and body fluids are associated with the monocyte-macrophage system and enhance the activity of immunoagents. The polypeptide is Lysozyme C (LYZ) (Allenopithecus nigroviridis (Allen's swamp monkey)).